A 348-amino-acid chain; its full sequence is Protein RecA (348 aa).

66 to 73 (GPESSGKT) serves as a coordination point for ATP.

The protein belongs to the RecA family.

Its subcellular location is the cytoplasm. Can catalyze the hydrolysis of ATP in the presence of single-stranded DNA, the ATP-dependent uptake of single-stranded DNA by duplex DNA, and the ATP-dependent hybridization of homologous single-stranded DNAs. It interacts with LexA causing its activation and leading to its autocatalytic cleavage. In Neisseria meningitidis serogroup A / serotype 4A (strain DSM 15465 / Z2491), this protein is Protein RecA.